The sequence spans 212 residues: Translation initiation factor IF-3 (212 aa).

Residues 190-203 are compositionally biased toward basic and acidic residues; it reads LVDKNSDSQDKSVS. A disordered region spans residues 190–212; that stretch reads LVDKNSDSQDKSVSEEDTNEGEQ.

The protein belongs to the IF-3 family. In terms of assembly, monomer.

It is found in the cytoplasm. Functionally, IF-3 binds to the 30S ribosomal subunit and shifts the equilibrium between 70S ribosomes and their 50S and 30S subunits in favor of the free subunits, thus enhancing the availability of 30S subunits on which protein synthesis initiation begins. The protein is Translation initiation factor IF-3 of Mycoplasmopsis fermentans (Mycoplasma fermentans).